The following is a 467-amino-acid chain: Transcription factor fos-1 (467 aa).

The span at methionine 1–asparagine 22 shows a compositional bias: low complexity. Disordered regions lie at residues methionine 1 to proline 38 and glutamine 139 to arginine 179. Positions aspartate 163–histidine 226 constitute a bZIP domain. Residues lysine 165 to lysine 205 form a basic motif region. The leucine-zipper stretch occupies residues isoleucine 212 to leucine 219. Disordered stretches follow at residues arginine 266 to aspartate 291 and glutamine 395 to leucine 467. A compositionally biased stretch (low complexity) spans serine 273–histidine 286. The span at serine 434–threonine 454 shows a compositional bias: polar residues. 3 positions are modified to phosphothreonine: threonine 440, threonine 452, and threonine 454.

The protein belongs to the bZIP family. Fos subfamily. In terms of assembly, homodimer. Heterodimer; with jun-1. Interacts with kgb-1 and hda-1. May be phosphorylated by kgb-1. Phosphorylation at Thr-440 increases sensitivity to heavy metal stress. Phosphorylation inhibits homodimer formation, and promotes association with target promoters. Expressed in anchor cells. Isoform a is expressed in somatic gonad cells that neighbor anchor cells. Isoform b is expressed in vulval cells, the uterine cells that neighbor anchor cells and the spermatheca.

It is found in the nucleus. In terms of biological role, developmentally regulated transcription factor which binds and recognizes the enhancer DNA sequence 5'-TGA[CG]TCA-3'. Its function is as follows. Plays a role the development of the reproductive system, controlling events including anchor cell (AC) fusion and invasion. Regulates downstream transcriptional targets, including zmp-1, cdh-3, him-4 and mig10b, to promote the removal of the gonadal basement membrane during AC invasion. Regulates aff-1 expression to promote AC fusion. With jun-1 regulates egl-1 and lin-12 expression to allow uterine cell specification and development. Functionally, required for ovulation. Controls plc-1 expression in the spermatheca to regulate spermathecal valve dilation. Acts with hda-1 as a downstream repressor of the kgb-1 mediated stress response pathway that transcriptionally represses genes involved in the response to heavy metals, such as kreg-1. The chain is Transcription factor fos-1 from Caenorhabditis elegans.